The sequence spans 652 residues: Transmembrane 9 superfamily member 12 (652 aa).

An N-terminal signal peptide occupies residues 1-20 (MFGVYRVFVLLVFVSQLCNG). Topologically, residues 21-286 (FYLPGSYMHT…LKMEGARVHW (266 aa)) are lumenal. The helical transmembrane segment at 287–307 (FSILNSLMVIFFLAGIVFVIF) threads the bilayer. Residues 308 to 362 (LRTVRRDLTKYEELDKEAQAQMNEELSGWKLVVGDVFREPEMSKLLCIMVGDGVR) are Cytoplasmic-facing. A helical transmembrane segment spans residues 363–383 (ITGMAVVTIVFAALGFMSPAS). At 384 to 386 (RGM) the chain is on the lumenal side. A helical transmembrane segment spans residues 387–407 (LLTGMIILYLFLGIVAGYAGV). The Cytoplasmic portion of the chain corresponds to 408-426 (RLWRTVKGTSEGWRSLSWS). A helical membrane pass occupies residues 427–447 (IACFFPGIAFVILTVLNFLLW). Over 448 to 460 (SSNSTGAIPISLY) the chain is Lumenal. A helical transmembrane segment spans residues 461 to 481 (FELLALWFCISVPLTLFGGFL). At 482–510 (GTRAEAIQFPVRTNQIPREIPERKYPSWL) the chain is on the cytoplasmic side. Residues 511–531 (LVLGAGTLPFGTLFIELFFIF) traverse the membrane as a helical segment. Residues 532–541 (SSIWLGRFYY) are Lumenal-facing. A helical membrane pass occupies residues 542–562 (VFGFLLIVLLLLVVVCAEVSV). The Cytoplasmic portion of the chain corresponds to 563 to 580 (VLTYMHLCVEDWRWWWKA). The chain crosses the membrane as a helical span at residues 581 to 601 (FYASGSVALYVFAYSINYLVF). Residues 602 to 613 (DLQSLSGPVSAM) lie on the Lumenal side of the membrane. A helical membrane pass occupies residues 614-634 (LYIGYSLLMAIAIMLATGTIG). The Cytoplasmic portion of the chain corresponds to 635–652 (FLTSFYFVHYLFSSVKID). The Endoplasmic reticulum export signal motif lies at 641–646 (FVHYLF). Positions 650-652 (KID) match the Golgi retention signal motif.

This sequence belongs to the nonaspanin (TM9SF) (TC 9.A.2) family.

Its subcellular location is the endosome membrane. It is found in the golgi apparatus membrane. The protein is Transmembrane 9 superfamily member 12 of Arabidopsis thaliana (Mouse-ear cress).